Consider the following 91-residue polypeptide: YcgL domain-containing protein ETA_15380 (91 aa).

In terms of domain architecture, YcgL spans 1–85 (MFCVIYRSPQ…PLESLLKIHL (85 aa)).

The polypeptide is YcgL domain-containing protein ETA_15380 (Erwinia tasmaniensis (strain DSM 17950 / CFBP 7177 / CIP 109463 / NCPPB 4357 / Et1/99)).